The primary structure comprises 168 residues: Peptide deformylase (168 aa).

Fe cation contacts are provided by Cys-92 and His-134. The active site involves Glu-135. His-138 serves as a coordination point for Fe cation.

It belongs to the polypeptide deformylase family. It depends on Fe(2+) as a cofactor.

The enzyme catalyses N-terminal N-formyl-L-methionyl-[peptide] + H2O = N-terminal L-methionyl-[peptide] + formate. Functionally, removes the formyl group from the N-terminal Met of newly synthesized proteins. Requires at least a dipeptide for an efficient rate of reaction. N-terminal L-methionine is a prerequisite for activity but the enzyme has broad specificity at other positions. The chain is Peptide deformylase from Hahella chejuensis (strain KCTC 2396).